We begin with the raw amino-acid sequence, 389 residues long: S-adenosylmethionine synthase (389 aa).

Histidine 15 contributes to the ATP binding site. A Mg(2+)-binding site is contributed by aspartate 17. Residue glutamate 43 participates in K(+) binding. Glutamate 56 and glutamine 99 together coordinate L-methionine. Residues 99 to 109 (QSPDIAQGVNE) form a flexible loop region. ATP contacts are provided by residues 166-168 (DAK), 234-235 (RF), aspartate 243, 249-250 (RK), alanine 266, and lysine 270. Aspartate 243 lines the L-methionine pocket. Lysine 274 lines the L-methionine pocket.

This sequence belongs to the AdoMet synthase family. In terms of assembly, homotetramer; dimer of dimers. It depends on Mg(2+) as a cofactor. K(+) serves as cofactor.

The protein resides in the cytoplasm. It carries out the reaction L-methionine + ATP + H2O = S-adenosyl-L-methionine + phosphate + diphosphate. The protein operates within amino-acid biosynthesis; S-adenosyl-L-methionine biosynthesis; S-adenosyl-L-methionine from L-methionine: step 1/1. Functionally, catalyzes the formation of S-adenosylmethionine (AdoMet) from methionine and ATP. The overall synthetic reaction is composed of two sequential steps, AdoMet formation and the subsequent tripolyphosphate hydrolysis which occurs prior to release of AdoMet from the enzyme. The sequence is that of S-adenosylmethionine synthase from Chromobacterium violaceum (strain ATCC 12472 / DSM 30191 / JCM 1249 / CCUG 213 / NBRC 12614 / NCIMB 9131 / NCTC 9757 / MK).